Here is a 192-residue protein sequence, read N- to C-terminus: Large ribosomal subunit protein uL5 (192 aa).

This sequence belongs to the universal ribosomal protein uL5 family. In terms of assembly, part of the 50S ribosomal subunit; part of the 5S rRNA/L5/L18/L25 subcomplex. Contacts the 5S rRNA and the P site tRNA. Forms a bridge to the 30S subunit in the 70S ribosome.

Its function is as follows. This is one of the proteins that bind and probably mediate the attachment of the 5S RNA into the large ribosomal subunit, where it forms part of the central protuberance. In the 70S ribosome it contacts protein S13 of the 30S subunit (bridge B1b), connecting the 2 subunits; this bridge is implicated in subunit movement. Contacts the P site tRNA; the 5S rRNA and some of its associated proteins might help stabilize positioning of ribosome-bound tRNAs. The protein is Large ribosomal subunit protein uL5 of Paenarthrobacter aurescens (strain TC1).